A 548-amino-acid chain; its full sequence is 5-epi-aristolochene synthase 1 (548 aa).

Mg(2+) is bound by residues aspartate 301, aspartate 305, aspartate 444, threonine 448, and glutamate 452. Residues 301–305 (DDTFD) carry the DDXXD motif motif.

This sequence belongs to the terpene synthase family. In terms of assembly, monomer. It depends on Mg(2+) as a cofactor. Expressed in roots, but not in shoots.

It localises to the cytoplasm. The catalysed reaction is (2E,6E)-farnesyl diphosphate = (+)-5-epi-aristolochene + diphosphate. It functions in the pathway secondary metabolite biosynthesis; terpenoid biosynthesis. Its function is as follows. Catalyzes the cyclization of trans,trans-farnesyl diphosphate (FPP) to the bicyclic intermediate 5-epi-aristolochene, initial step in the conversion of FPP to the sesquiterpenoid antifungal phytoalexin capsidiol. Produces germacrene A as an enzyme-bound intermediate that is not released by the enzyme, but is further cyclized to produce the bicyclic 5-epi-aristolochene. The polypeptide is 5-epi-aristolochene synthase 1 (EAS) (Nicotiana attenuata (Coyote tobacco)).